The sequence spans 210 residues: MHRRITGKLVIATHNPGKLAEMRELLAPYGIEAISAGELGLAEPDETGDSFQANARIKAEAAAKAAQLPAFADDSGLAVDALDGAPGIYSARWAGDAKDFAGAMARIERLLQERGATAPERRTAHFVSALCVAWPDGHIEEVEARADGTLVWPPRGTAGFGYDPVFLPEGHSRTFGEMTSIEKHGLPPLGLGLSHRAKAFVKLAEICLAG.

A substrate-binding site is contributed by 13–18 (THNPGK). 2 residues coordinate Mg(2+): aspartate 45 and aspartate 74. The active-site Proton acceptor is the aspartate 74. Residues serine 75, 160–163 (FGYD), lysine 183, and 195–196 (HR) contribute to the substrate site.

Belongs to the HAM1 NTPase family. Homodimer. It depends on Mg(2+) as a cofactor.

It catalyses the reaction XTP + H2O = XMP + diphosphate + H(+). The catalysed reaction is dITP + H2O = dIMP + diphosphate + H(+). The enzyme catalyses ITP + H2O = IMP + diphosphate + H(+). In terms of biological role, pyrophosphatase that catalyzes the hydrolysis of nucleoside triphosphates to their monophosphate derivatives, with a high preference for the non-canonical purine nucleotides XTP (xanthosine triphosphate), dITP (deoxyinosine triphosphate) and ITP. Seems to function as a house-cleaning enzyme that removes non-canonical purine nucleotides from the nucleotide pool, thus preventing their incorporation into DNA/RNA and avoiding chromosomal lesions. In Rhodopseudomonas palustris (strain ATCC BAA-98 / CGA009), this protein is dITP/XTP pyrophosphatase.